The primary structure comprises 166 residues: Transcription antitermination protein NusB (166 aa).

Residues 1 to 18 (MISDESDRFNPRDPKPAD) show a composition bias toward basic and acidic residues. The interval 1–30 (MISDESDRFNPRDPKPADAGKPSKSAKRRE) is disordered.

Belongs to the NusB family.

In terms of biological role, involved in transcription antitermination. Required for transcription of ribosomal RNA (rRNA) genes. Binds specifically to the boxA antiterminator sequence of the ribosomal RNA (rrn) operons. In Pseudomonas entomophila (strain L48), this protein is Transcription antitermination protein NusB.